The primary structure comprises 555 residues: MAKLILFHEDSRQALERGVNALANAVKVTLGPRGRNVLLEKKFGAPEIINDGVSIAKEIELEDPHENAGARLVQEVAAKTKEIAGDGTTTATVLAQAIVREGLTNVAAGANPIVLRRGIEKAVATLVEAIAAKAQPVADEAAIRSIAAVSAGNDDEVGQMIADAVAKVTKDGVITVEESKSLATELEVVEGMQFDRGYLSPYFVTDQDRQVVEYDNPLILLTDKKIASIQDLVPVLEDVARAGRPLLIIAEDIEGEALATLVVNKARGVLNTVAVKAPAFGDRRKAILQDIAVLTGGQVISEEVGLSLADANSSVLGKAQKITISKDTTIIVAGDENKADVAARIAQIRRSLEETDSDYDREKLQERIAKLAGGVAVIKVGAPTETELKNRKLRIEDALNATRAAIEEGVVPGGGTTLLHLASALTSLQASLTVADEKLGVEIVARALEAPLRQIADNAGAEGSVVVEKLRDKDFNFGYNALTGQYEDLVASGILDPAKVVRSALQDAASVASLILTTEVLVVDQPEPEPAMPAGGDMGGMGGMGMPGMGGMGMM.

Residues 29-32 (TLGP), 86-90 (DGTTT), G414, 480-482 (NAL), and D496 contribute to the ATP site.

Belongs to the chaperonin (HSP60) family. Forms a cylinder of 14 subunits composed of two heptameric rings stacked back-to-back. Interacts with the co-chaperonin GroES.

The protein localises to the cytoplasm. It carries out the reaction ATP + H2O + a folded polypeptide = ADP + phosphate + an unfolded polypeptide.. In terms of biological role, together with its co-chaperonin GroES, plays an essential role in assisting protein folding. The GroEL-GroES system forms a nano-cage that allows encapsulation of the non-native substrate proteins and provides a physical environment optimized to promote and accelerate protein folding. The sequence is that of Chaperonin GroEL 2 from Synechococcus sp. (strain ATCC 27144 / PCC 6301 / SAUG 1402/1) (Anacystis nidulans).